Here is a 149-residue protein sequence, read N- to C-terminus: Large-conductance mechanosensitive channel (149 aa).

2 helical membrane-spanning segments follow: residues 8–28 and 74–94; these read FIMR…SAFT and IGSV…LFLI.

It belongs to the MscL family. As to quaternary structure, homopentamer.

It localises to the cell membrane. In terms of biological role, channel that opens in response to stretch forces in the membrane lipid bilayer. May participate in the regulation of osmotic pressure changes within the cell. In Enterococcus faecalis (strain ATCC 700802 / V583), this protein is Large-conductance mechanosensitive channel.